Reading from the N-terminus, the 309-residue chain is tRNA pseudouridine synthase B (309 aa).

D51 (nucleophile) is an active-site residue.

It belongs to the pseudouridine synthase TruB family. Type 1 subfamily.

The catalysed reaction is uridine(55) in tRNA = pseudouridine(55) in tRNA. Its function is as follows. Responsible for synthesis of pseudouridine from uracil-55 in the psi GC loop of transfer RNAs. The chain is tRNA pseudouridine synthase B from Coxiella burnetii (strain RSA 493 / Nine Mile phase I).